The primary structure comprises 415 residues: Histidine--tRNA ligase (415 aa).

It belongs to the class-II aminoacyl-tRNA synthetase family. Homodimer.

The protein localises to the cytoplasm. The catalysed reaction is tRNA(His) + L-histidine + ATP = L-histidyl-tRNA(His) + AMP + diphosphate + H(+). The polypeptide is Histidine--tRNA ligase (Clostridium perfringens (strain SM101 / Type A)).